The primary structure comprises 432 residues: Peptidase B (432 aa).

Positions 196 and 201 each coordinate Mn(2+). The active site involves lysine 208. Aspartate 219, aspartate 278, and glutamate 280 together coordinate Mn(2+). Arginine 282 is an active-site residue.

Belongs to the peptidase M17 family. In terms of assembly, homohexamer. Mn(2+) serves as cofactor.

It is found in the cytoplasm. The catalysed reaction is Release of an N-terminal amino acid, Xaa, from a peptide or arylamide. Xaa is preferably Glu or Asp but may be other amino acids, including Leu, Met, His, Cys and Gln.. In terms of biological role, probably plays an important role in intracellular peptide degradation. The chain is Peptidase B from Yersinia pseudotuberculosis serotype O:1b (strain IP 31758).